The primary structure comprises 498 residues: U4/U6 small nuclear ribonucleoprotein Prp31 (498 aa).

Positions 1 to 24 are disordered; it reads MSLADELLADLEEAAEEEEENLID. Acidic residues predominate over residues 7 to 24; sequence LLADLEEAAEEEEENLID. 2 coiled-coil regions span residues 84–119 and 180–214; these read EAAPEYKVIVDANNLTVEIENELNIIHKFIRDKYSK and DEELERIEEACDMALELNQSKHRIYEYVESRMSFI. The region spanning 214 to 332 is the Nop domain; the sequence is IAPNLSIIVG…IERKFDKWQE (119 aa). The interval 333–356 is disordered; it reads PPPVKQVKPLPAPLDGQRKKRGGR. The Nuclear localization signal (NLS) motif lies at 350–363; it reads RKKRGGRRYRKMKE.

The protein belongs to the PRP31 family. Identified in the spliceosome B complex. Component of the U4/U6-U5 tri-snRNP complex. Component of some MLL1/MLL complex.

The protein localises to the nucleus. It localises to the nucleus speckle. It is found in the cajal body. Its function is as follows. Involved in pre-mRNA splicing as component of the spliceosome. Required for the assembly of the U4/U5/U6 tri-snRNP complex, one of the building blocks of the spliceosome. This chain is U4/U6 small nuclear ribonucleoprotein Prp31 (prpf31), found in Xenopus laevis (African clawed frog).